The chain runs to 332 residues: MFPPRKFLLSSFILAALHVTAAPLWDAKDPEQLRFITSRCMEDWYPKAKNPKAALQNWLGWKLEPSDDQATQCYTKCVLEKIGFYEPGEKRFKGVRVMQQWETFHKYLNADREKVHDLTSTFDFIPPLKSSSCSEVFEAFKKVNGKHSETIRAILFGKGESSKKYYQEKGVKIKQKEQSLFMHCEALNYPKGSPQRKDLCGIRKYQMGSGIVFERHMECIFKGLRYMTSKNELDVDEIARDFIVVKKKPDAMKAMMKTCKANLKEKNPGKIAVHYYKCLMNDSKVTNDFKEAFDYREVRSKDYFAALTGKLKPYSRSDVRKQVDDIDKIQCS.

The first 21 residues, 1–21, serve as a signal peptide directing secretion; that stretch reads MFPPRKFLLSSFILAALHVTA. 2 disulfides stabilise this stretch: Cys40/Cys77 and Cys73/Cys133. Leukotriene E4 is bound at residue Trp61. Leukotriene E4 contacts are provided by Gly157 and Lys176. Disulfide bonds link Cys184–Cys219, Cys200–Cys331, and Cys259–Cys278. Noradrenaline is bound by residues Glu185, Arg203, and His216. Residues Asp294 and Glu297 each coordinate noradrenaline.

This sequence belongs to the PBP/GOBP family. Interacts with human CD4. Saliva (at protein level). Female salivary gland (at protein level). Detected in the head and thorax of the female mosquitoes, where the salivary glands are located.

It is found in the secreted. Functionally, modulates blood feeding of female mosquitoes on vertebrate species by binding and sequestering different mediators involved in the host response, such as biogenic amines and eicosanoids. Binds serotonin, histamine, tryptamine, noradrenaline, leukotriene B4, leukotriene C4, leukotriene D4, leukotriene E4 and U-46619, a stable analog of thromboxane A2. Does not bind adrenaline. Exhibits vasodilating activity. Inhibits agonist-induced platelet aggregation but not blood clotting. (Microbial infection) Probably promotes Plasmodium gallinaceum oocyst development in mosquito midgut. The sequence is that of Long form salivary protein D7L2 from Aedes aegypti (Yellowfever mosquito).